Consider the following 751-residue polypeptide: MGPQGARRQAFLAFGDVTVDFTQKEWRLLSPAQRALYREVTLENYSHLVSLGILHSKPELIRRLEQGEVPWGEERRRRPGPCAGIYAEHVLRPKNLGLAHQRQQQLQFSDQSFQSDTAEGQEKEKSTKPMAFSSPPLRHAVSSRRRNSVVEIESSQGQRENPTEIDKVLKGIENSRWGAFKCAERGQDFSRKMMVIIHKKAHSRQKLFTCRECHQGFRDESALLLHQNTHTGEKSYVCSVCGRGFSLKANLLRHQRTHSGEKPFLCKVCGRGYTSKSYLTVHERTHTGEKPYECQECGRRFNDKSSYNKHLKAHSGEKPFVCKECGRGYTNKSYFVVHKRIHSGEKPYRCQECGRGFSNKSHLITHQRTHSGEKPFACRQCKQSFSVKGSLLRHQRTHSGEKPFVCKDCERSFSQKSTLVYHQRTHSGEKPFVCRECGQGFIQKSTLVKHQITHSEEKPFVCKDCGRGFIQKSTFTLHQRTHSEEKPYGCRECGRRFRDKSSYNKHLRAHLGEKRFFCRDCGRGFTLKPNLTIHQRTHSGEKPFMCKQCEKSFSLKANLLRHQWTHSGERPFNCKDCGRGFILKSTLLFHQKTHSGEKPFICSECGQGFIWKSNLVKHQLAHSGKQPFVCKECGRGFNWKGNLLTHQRTHSGEKPFVCNVCGQGFSWKRSLTRHHWRIHSKEKPFVCQECKRGYTSKSDLTVHERIHTGERPYECQECGRKFSNKSYYSKHLKRHLREKRFCTGSVGEASS.

The KRAB domain occupies 12–83; it reads LAFGDVTVDF…ERRRRPGPCA (72 aa). Over residues 101–116 the composition is skewed to low complexity; sequence QRQQQLQFSDQSFQSD. The segment at 101 to 163 is disordered; that stretch reads QRQQQLQFSD…SSQGQRENPT (63 aa). The C2H2-type 1; degenerate zinc finger occupies 180-202; it reads FKCAERGQDFSRKMMVIIHKKAH. C2H2-type zinc fingers lie at residues 208 to 230, 236 to 258, 264 to 286, 292 to 314, 320 to 342, 348 to 370, 376 to 398, 404 to 426, and 432 to 454; these read FTCR…QNTH, YVCS…QRTH, FLCK…ERTH, YECQ…LKAH, FVCK…KRIH, YRCQ…QRTH, FACR…QRTH, FVCK…QRTH, and FVCR…QITH. A Glycyl lysine isopeptide (Lys-Gly) (interchain with G-Cter in SUMO2) cross-link involves residue Lys458. 10 C2H2-type zinc fingers span residues 460–482, 488–510, 516–538, 544–566, 572–594, 600–622, 628–650, 656–679, 685–707, and 713–735; these read FVCK…QRTH, YGCR…LRAH, FFCR…QRTH, FMCK…QWTH, FNCK…QKTH, FICS…QLAH, FVCN…WRIH, FVCQ…ERIH, and YECQ…LKRH.

It belongs to the krueppel C2H2-type zinc-finger protein family.

The protein localises to the nucleus. May be involved in transcriptional regulation. This is Zinc finger protein 337 (ZNF337) from Homo sapiens (Human).